The primary structure comprises 321 residues: Probable GDP-L-fucose synthase (321 aa).

8–14 contacts NADP(+); it reads GGTGLVG. Residue Tyr-136 is the Proton donor/acceptor of the active site. NADP(+) contacts are provided by residues Lys-140, 163 to 166, and His-179; that span reads PCNI. Arg-187, Arg-215, and Asp-277 together coordinate substrate.

This sequence belongs to the NAD(P)-dependent epimerase/dehydratase family. Fucose synthase subfamily. In terms of assembly, homodimer.

The catalysed reaction is GDP-beta-L-fucose + NADP(+) = GDP-4-dehydro-alpha-D-rhamnose + NADPH + H(+). It participates in nucleotide-sugar biosynthesis; GDP-L-fucose biosynthesis via de novo pathway; GDP-L-fucose from GDP-alpha-D-mannose: step 2/2. Functionally, catalyzes the two-step NADP-dependent conversion of GDP-4-dehydro-6-deoxy-D-mannose to GDP-fucose, involving an epimerase and a reductase reaction. This Drosophila melanogaster (Fruit fly) protein is Probable GDP-L-fucose synthase (Gmer).